The primary structure comprises 1011 residues: Cell division cycle-associated protein 2 (1011 aa).

Polar residues predominate over residues 1–22 (MDTCSQESEPLQTKESPINNAG). The tract at residues 1–26 (MDTCSQESEPLQTKESPINNAGKTPL) is disordered. Residues Ser-125, Ser-130, Ser-209, Ser-293, and Ser-310 each carry the phosphoserine modification. Thr-313 bears the Phosphothreonine mark. A PP1-binding domain is found at 380–440 (KRKRVTFGED…PEWLPQPNFD (61 aa)). Residues Ser-391 and Ser-398 each carry the phosphoserine modification. 2 disordered regions span residues 395–438 (LDES…PQPN) and 522–544 (PCKE…KVLP). The residue at position 403 (Thr-403) is a Phosphothreonine. Over residues 418-431 (SSLSPPLLEQSPVP) the composition is skewed to low complexity. Ser-428 carries the post-translational modification Phosphoserine. Residues 522–543 (PCKEKKTNRRKSQESKHADKVL) show a composition bias toward basic and acidic residues. Ser-583, Ser-702, and Ser-747 each carry phosphoserine. Lys-753 participates in a covalent cross-link: Glycyl lysine isopeptide (Lys-Gly) (interchain with G-Cter in SUMO2). The span at 790 to 803 (DQRKVSKSQGEDLG) shows a compositional bias: basic and acidic residues. Disordered regions lie at residues 790-835 (DQRK…GLHL) and 896-1011 (GLVW…LSEN). Positions 931–945 (SSRQDPCTLPSTSSE) are enriched in polar residues. The residue at position 967 (Ser-967) is a Phosphoserine. Residues 968 to 983 (FCTSTLANPKSTTQSR) show a composition bias toward polar residues. The segment covering 993–1011 (QKRENTLQETSRESDLSEN) has biased composition (basic and acidic residues).

In terms of assembly, interacts with PPP1CC. Phosphorylated by CDK1. May regulate its subcellular location.

The protein localises to the nucleus. Its function is as follows. Regulator of chromosome structure during mitosis required for condensin-depleted chromosomes to retain their compact architecture through anaphase. Acts by mediating the recruitment of phopsphatase PP1-gamma subunit (PPP1CC) to chromatin at anaphase and into the following interphase. At anaphase onset, its association with chromatin targets a pool of PPP1CC to dephosphorylate substrates. The protein is Cell division cycle-associated protein 2 (CDCA2) of Bos taurus (Bovine).